A 142-amino-acid chain; its full sequence is Hemoglobin subunit alpha-A (142 aa).

In terms of domain architecture, Globin spans 2–142; it reads VLSANDKSNV…VGTVLTAKYR (141 aa). His-59 contributes to the O2 binding site. His-88 lines the heme b pocket.

This sequence belongs to the globin family. As to quaternary structure, heterotetramer of two alpha chains and two beta chains. As to expression, red blood cells.

Functionally, involved in oxygen transport from the lung to the various peripheral tissues. The chain is Hemoglobin subunit alpha-A (HBAA) from Columba livia (Rock dove).